An 821-amino-acid chain; its full sequence is Centrosomal protein of 95 kDa (821 aa).

Disordered stretches follow at residues 310–354, 390–474, and 514–550; these read TLCK…FPQK, ATGE…DTHH, and KEAF…SSKA. Basic and acidic residues-rich tracts occupy residues 325 to 340 and 390 to 410; these read ESSK…RSEN and ATGE…HSAN. The span at 427-441 shows a compositional bias: basic residues; that stretch reads RKPRPGFSMHRKAPY. Phosphoserine is present on residues Ser445, Ser447, and Ser449. Coiled-coil stretches lie at residues 578 to 627 and 695 to 789; these read LTKM…VKKE and LQIQ…DDDA.

Its subcellular location is the cytoplasm. It is found in the cytoskeleton. The protein resides in the microtubule organizing center. It localises to the centrosome. The protein localises to the spindle pole. The protein is Centrosomal protein of 95 kDa (Cep95) of Rattus norvegicus (Rat).